Consider the following 132-residue polypeptide: Small ribosomal subunit protein uS9 (132 aa).

Residues 101-132 (KRAGLLTRDPRMKERKKPGLKAARRSPQFSKR) are disordered. The span at 113-132 (KERKKPGLKAARRSPQFSKR) shows a compositional bias: basic residues.

Belongs to the universal ribosomal protein uS9 family.

This is Small ribosomal subunit protein uS9 from Staphylococcus aureus (strain USA300).